A 442-amino-acid chain; its full sequence is Gamma-glutamyl phosphate reductase (442 aa).

It belongs to the gamma-glutamyl phosphate reductase family.

The protein localises to the cytoplasm. The catalysed reaction is L-glutamate 5-semialdehyde + phosphate + NADP(+) = L-glutamyl 5-phosphate + NADPH + H(+). Its pathway is amino-acid biosynthesis; L-proline biosynthesis; L-glutamate 5-semialdehyde from L-glutamate: step 2/2. Functionally, catalyzes the NADPH-dependent reduction of L-glutamate 5-phosphate into L-glutamate 5-semialdehyde and phosphate. The product spontaneously undergoes cyclization to form 1-pyrroline-5-carboxylate. The sequence is that of Gamma-glutamyl phosphate reductase from Campylobacter curvus (strain 525.92).